The following is a 395-amino-acid chain: NADH-quinone oxidoreductase subunit D (395 aa).

The protein belongs to the complex I 49 kDa subunit family. NDH-1 is composed of 14 different subunits. Subunits NuoB, C, D, E, F, and G constitute the peripheral sector of the complex.

It localises to the cell inner membrane. It catalyses the reaction a quinone + NADH + 5 H(+)(in) = a quinol + NAD(+) + 4 H(+)(out). NDH-1 shuttles electrons from NADH, via FMN and iron-sulfur (Fe-S) centers, to quinones in the respiratory chain. The immediate electron acceptor for the enzyme in this species is believed to be ubiquinone. Couples the redox reaction to proton translocation (for every two electrons transferred, four hydrogen ions are translocated across the cytoplasmic membrane), and thus conserves the redox energy in a proton gradient. The polypeptide is NADH-quinone oxidoreductase subunit D (Anaplasma phagocytophilum (strain HZ)).